A 234-amino-acid polypeptide reads, in one-letter code: MTNVIEARGIEKVFHNGDEETRVLKGIDLTLGQGELAAMVGASGSGKSTLLSIIGLLLRPTAGTLSISGERVDDLSERMRARFRNQRLGFVFQFHHLLPDFTAMENVAFPAAAPGGGISRAMRTRARDLLARVGLEDRIDFPAARLSGGQKQRVAIARALMNRPDLIIADEPTGNLDRESADRVLDLMREVNREEGATFLICTHDDGVAARCGRRLTLSDGRLTSNVRDPGGFS.

The ABC transporter domain maps to 5-231 (IEARGIEKVF…RLTSNVRDPG (227 aa)). An ATP-binding site is contributed by 41 to 48 (GASGSGKS).

Belongs to the ABC transporter superfamily. Lipoprotein translocase (TC 3.A.1.125) family. In terms of assembly, the complex is composed of two ATP-binding proteins (LolD) and two transmembrane proteins (LolC and LolE).

It is found in the cell inner membrane. In terms of biological role, part of the ABC transporter complex LolCDE involved in the translocation of mature outer membrane-directed lipoproteins, from the inner membrane to the periplasmic chaperone, LolA. Responsible for the formation of the LolA-lipoprotein complex in an ATP-dependent manner. This is Lipoprotein-releasing system ATP-binding protein LolD 1 from Caulobacter vibrioides (strain ATCC 19089 / CIP 103742 / CB 15) (Caulobacter crescentus).